The primary structure comprises 336 residues: Aspartate--ammonia ligase (336 aa).

It belongs to the class-II aminoacyl-tRNA synthetase family. AsnA subfamily.

It is found in the cytoplasm. It catalyses the reaction L-aspartate + NH4(+) + ATP = L-asparagine + AMP + diphosphate + H(+). It functions in the pathway amino-acid biosynthesis; L-asparagine biosynthesis; L-asparagine from L-aspartate (ammonia route): step 1/1. This is Aspartate--ammonia ligase from Ligilactobacillus salivarius (strain UCC118) (Lactobacillus salivarius).